The following is a 203-amino-acid chain: Guanylate kinase (203 aa).

A Guanylate kinase-like domain is found at 4–183 (GKLFVISAPS…ASTLLKSIIW (180 aa)). 11-18 (APSGAGKT) provides a ligand contact to ATP.

It belongs to the guanylate kinase family.

The protein localises to the cytoplasm. It catalyses the reaction GMP + ATP = GDP + ADP. Essential for recycling GMP and indirectly, cGMP. The protein is Guanylate kinase of Desulfotalea psychrophila (strain LSv54 / DSM 12343).